Consider the following 154-residue polypeptide: Large ribosomal subunit protein uL13 (154 aa).

The protein belongs to the universal ribosomal protein uL13 family. As to quaternary structure, part of the 50S ribosomal subunit.

Functionally, this protein is one of the early assembly proteins of the 50S ribosomal subunit, although it is not seen to bind rRNA by itself. It is important during the early stages of 50S assembly. The polypeptide is Large ribosomal subunit protein uL13 (Bartonella henselae (strain ATCC 49882 / DSM 28221 / CCUG 30454 / Houston 1) (Rochalimaea henselae)).